Consider the following 330-residue polypeptide: Phenylalanine--tRNA ligase alpha subunit (330 aa).

Glu-254 is a Mg(2+) binding site.

It belongs to the class-II aminoacyl-tRNA synthetase family. Phe-tRNA synthetase alpha subunit type 1 subfamily. As to quaternary structure, tetramer of two alpha and two beta subunits. Mg(2+) serves as cofactor.

The protein localises to the cytoplasm. It carries out the reaction tRNA(Phe) + L-phenylalanine + ATP = L-phenylalanyl-tRNA(Phe) + AMP + diphosphate + H(+). The protein is Phenylalanine--tRNA ligase alpha subunit (pheS) of Neisseria meningitidis serogroup B (strain ATCC BAA-335 / MC58).